The chain runs to 295 residues: Bifunctional protein FolD (295 aa).

NADP(+)-binding positions include 177 to 179 (GRS) and Ser202.

Belongs to the tetrahydrofolate dehydrogenase/cyclohydrolase family. Homodimer.

The catalysed reaction is (6R)-5,10-methylene-5,6,7,8-tetrahydrofolate + NADP(+) = (6R)-5,10-methenyltetrahydrofolate + NADPH. The enzyme catalyses (6R)-5,10-methenyltetrahydrofolate + H2O = (6R)-10-formyltetrahydrofolate + H(+). The protein operates within one-carbon metabolism; tetrahydrofolate interconversion. Functionally, catalyzes the oxidation of 5,10-methylenetetrahydrofolate to 5,10-methenyltetrahydrofolate and then the hydrolysis of 5,10-methenyltetrahydrofolate to 10-formyltetrahydrofolate. In Psychrobacter arcticus (strain DSM 17307 / VKM B-2377 / 273-4), this protein is Bifunctional protein FolD.